Here is a 325-residue protein sequence, read N- to C-terminus: tRNA N6-adenosine threonylcarbamoyltransferase (325 aa).

Residues H107 and H111 each coordinate Fe cation. Residues 129 to 133 (LVSGG), D162, G175, and N265 contribute to the substrate site. D293 serves as a coordination point for Fe cation.

The protein belongs to the KAE1 / TsaD family. Fe(2+) serves as cofactor.

Its subcellular location is the cytoplasm. It carries out the reaction L-threonylcarbamoyladenylate + adenosine(37) in tRNA = N(6)-L-threonylcarbamoyladenosine(37) in tRNA + AMP + H(+). In terms of biological role, required for the formation of a threonylcarbamoyl group on adenosine at position 37 (t(6)A37) in tRNAs that read codons beginning with adenine. Is involved in the transfer of the threonylcarbamoyl moiety of threonylcarbamoyl-AMP (TC-AMP) to the N6 group of A37, together with TsaE and TsaB. TsaD likely plays a direct catalytic role in this reaction. This Sulfurimonas denitrificans (strain ATCC 33889 / DSM 1251) (Thiomicrospira denitrificans (strain ATCC 33889 / DSM 1251)) protein is tRNA N6-adenosine threonylcarbamoyltransferase.